We begin with the raw amino-acid sequence, 586 residues long: Chaperonin 60 subunit alpha 1, chloroplastic (586 aa).

A chloroplast-targeting transit peptide spans 1-46 (MASANALSSASVLCSSRQSKLGGGNQQQGQRVSYNKRTIRRFSVRA). Ser-90 carries the post-translational modification Phosphoserine.

The protein belongs to the chaperonin (HSP60) family. In terms of assembly, part of the Cpn60 complex composed of 7 alpha and 7 beta subunits. This complex shows ATPase activity. The Cpn60 complex interacts with the Cpn10 complex. Expressed in leaves, stems, siliques and flowers.

Its subcellular location is the plastid. It localises to the chloroplast. In terms of biological role, binds RuBisCO small and large subunits and is implicated in the assembly of the enzyme oligomer. Involved in protein assisted folding. Required for proper chloroplast development. The protein is Chaperonin 60 subunit alpha 1, chloroplastic (CPN60A1) of Arabidopsis thaliana (Mouse-ear cress).